Reading from the N-terminus, the 819-residue chain is MSKPLPSALNPLAKALLIRHSLRPRHALSRIGMGLALSSALVFQVQAQEWTLDIPAQSMNSALQALAKQTDTQLLYSPEDIGGLRSSALKGRHDLQSSLRILLQGTGLRYQIDGNTVTVTASAAAKDGQIELSATNVNSAGLGETTEGTGSYTTRVTSTATKMNLSIRETPQTITVVTRQRMDDQHLGSMNEVLTQTPGITMSQDGGERFNIYSRGSAINIYQFDGVTTYQDNQTRNMPSTLMDVGLYDRIEIVRGATGLMTGAGDPSAVVNVIRKRPTREFKSHIQAGVGSWDYYRAEADVSGPLTDDGRVRGRFFAAKQDNHTFMDWYTQDRDVLYGVVEADVTDTTVARFGIDRQTYKVNGAPGVPIIYTNGQPTNFSRSTSSDARWGYDDYTTTNYTFGLEQQLAHDWQFKLAAAYMDVDRDSFSSYYSTTTNRSYLELDGSTEISAGIVTAKQHQKGVDATLQGPFQLLGQTHELIVGYNYLEYENKHRGDSGPDVNINFYDWDNQTPKPGDDEIIPGIQYNISNRQSGYFVASRFNLTDDLHLILGARASNYRFDYALWRIGNEPAPYKMVERGVVTPYAGIVYDLTNEQSVYASYTDIFKPQNNVDITGKPLDPEVGKNYELGWKGEFLEGRLNANIALYMVKRDNLAESTNEVVPDSGGLIASRAVDGAETKGVDVELSGEVLPGWNVFTGYSHTRTEDADGKRLTPQLPMDTFRFWNTYRLPGEWEKLTLGGGVNWNSKSTLNFARYNSHVTQDDYFVTSLMARYRINESLAATLNVNNIFDKKYYAGMAGSYGHYGAPRNATVTLRYDF.

The signal sequence occupies residues 1–47 (MSKPLPSALNPLAKALLIRHSLRPRHALSRIGMGLALSSALVFQVQA). The TonB box signature appears at 115–122 (NTVTVTAS). A TBDR plug domain is found at 166–276 (SIRETPQTIT…PSAVVNVIRK (111 aa)). Residues 281–819 (EFKSHIQAGV…NATVTLRYDF (539 aa)) enclose the TBDR beta-barrel domain. A TonB C-terminal box motif is present at residues 802–819 (YGHYGAPRNATVTLRYDF).

It belongs to the TonB-dependent receptor family.

The protein localises to the cell outer membrane. Its function is as follows. Specific receptor for the siderophore ferric pyoverdine (pseudobactin) 358. This chain is Ferric-pyoverdine 358 receptor (pupA), found in Pseudomonas putida (Arthrobacter siderocapsulatus).